The sequence spans 245 residues: MASSGNGTTAGTGSPCGACKFLRRKCASDCIFAPYFSSEQGAARFAAIHKVFGASNVSKLLLNVPIHDRCEAVVTIAYEAQARLHDPVYGCVSHIFALQQQVAFLQSQVMQMKAQIAGHQTSAAGDLRHSSESTNQFMTWQQTSVSPIGSAYSTPYNHHQPYYGHVNPNNPVSPQSSLEESFSNTSSDVTTTANVRETHHQTGGGVYGHDGIGFHEGYPNKKRSVSYCSSDLGELQALALRMMKN.

The 103-residue stretch at 14 to 116 (SPCGACKFLR…SQVMQMKAQI (103 aa)) folds into the LOB domain. Residues 162 to 183 (YYGHVNPNNPVSPQSSLEESFS) are disordered.

Belongs to the LOB domain-containing protein family. As to quaternary structure, homodimer and heterodimer with LBD18. In terms of tissue distribution, expressed in roots and faintly in shoots.

The protein resides in the nucleus. In terms of biological role, transcriptional activator. Involved in lateral root formation. Regulated by the transcriptional activators ARF7 and ARF19. Functions in the initiation and emergence of lateral roots, in conjunction with LBD18, downstream of ARF7 and ARF19. Acts downstream of the auxin influx carriers AUX1 and LAX1 in the regulation of lateral root initiation and development. The polypeptide is LOB domain-containing protein 16 (LBD16) (Arabidopsis thaliana (Mouse-ear cress)).